Reading from the N-terminus, the 91-residue chain is Sec-independent protein translocase protein TatA (91 aa).

Residues 1–21 (MGSMSVWHWVIVAVVVMLLFG) form a helical membrane-spanning segment. Residues 42–91 (GMADDETQPTNTTSVPPVGPNDPVRTLPHQGAPGTAPQQTHVPAGDHKAV) are disordered.

The protein belongs to the TatA/E family. The Tat system comprises two distinct complexes: a TatABC complex, containing multiple copies of TatA, TatB and TatC subunits, and a separate TatA complex, containing only TatA subunits. Substrates initially bind to the TatABC complex, which probably triggers association of the separate TatA complex to form the active translocon.

It localises to the cell inner membrane. Part of the twin-arginine translocation (Tat) system that transports large folded proteins containing a characteristic twin-arginine motif in their signal peptide across membranes. TatA could form the protein-conducting channel of the Tat system. In Methylorubrum populi (strain ATCC BAA-705 / NCIMB 13946 / BJ001) (Methylobacterium populi), this protein is Sec-independent protein translocase protein TatA.